Here is a 179-residue protein sequence, read N- to C-terminus: Bifunctional protein PyrR (179 aa).

The PRPP-binding signature appears at 97–109; that stretch reads IILTDDVLYTGRT.

It belongs to the purine/pyrimidine phosphoribosyltransferase family. PyrR subfamily.

It carries out the reaction UMP + diphosphate = 5-phospho-alpha-D-ribose 1-diphosphate + uracil. In terms of biological role, regulates the transcription of the pyrimidine nucleotide (pyr) operon in response to exogenous pyrimidines. Functionally, also displays a weak uracil phosphoribosyltransferase activity which is not physiologically significant. The polypeptide is Bifunctional protein PyrR (Elusimicrobium minutum (strain Pei191)).